Consider the following 438-residue polypeptide: Asparagine--tRNA ligase (438 aa).

This sequence belongs to the class-II aminoacyl-tRNA synthetase family. Homodimer.

Its subcellular location is the cytoplasm. The catalysed reaction is tRNA(Asn) + L-asparagine + ATP = L-asparaginyl-tRNA(Asn) + AMP + diphosphate + H(+). The sequence is that of Asparagine--tRNA ligase from Thermus thermophilus (strain ATCC 27634 / DSM 579 / HB8).